Here is a 151-residue protein sequence, read N- to C-terminus: Ribosome maturation factor RimP (151 aa).

The protein belongs to the RimP family.

The protein resides in the cytoplasm. Required for maturation of 30S ribosomal subunits. This Aliivibrio fischeri (strain MJ11) (Vibrio fischeri) protein is Ribosome maturation factor RimP.